Here is a 204-residue protein sequence, read N- to C-terminus: dITP/XTP pyrophosphatase (204 aa).

8-13 (SNNAKK) provides a ligand contact to substrate. Mg(2+) is bound by residues E43 and D72. D72 (proton acceptor) is an active-site residue. Substrate-binding positions include S73, 155 to 158 (FGYD), K180, and 185 to 186 (HR).

Belongs to the HAM1 NTPase family. Homodimer. Mg(2+) serves as cofactor.

It catalyses the reaction XTP + H2O = XMP + diphosphate + H(+). The enzyme catalyses dITP + H2O = dIMP + diphosphate + H(+). It carries out the reaction ITP + H2O = IMP + diphosphate + H(+). Functionally, pyrophosphatase that catalyzes the hydrolysis of nucleoside triphosphates to their monophosphate derivatives, with a high preference for the non-canonical purine nucleotides XTP (xanthosine triphosphate), dITP (deoxyinosine triphosphate) and ITP. Seems to function as a house-cleaning enzyme that removes non-canonical purine nucleotides from the nucleotide pool, thus preventing their incorporation into DNA/RNA and avoiding chromosomal lesions. The polypeptide is dITP/XTP pyrophosphatase (Cutibacterium acnes (strain DSM 16379 / KPA171202) (Propionibacterium acnes)).